We begin with the raw amino-acid sequence, 219 residues long: Guanylate kinase (219 aa).

Positions 15-194 (GLMFVLSSPS…AFAEVHSILK (180 aa)) constitute a Guanylate kinase-like domain. 22–29 (SPSGAGKT) contacts ATP.

The protein belongs to the guanylate kinase family.

Its subcellular location is the cytoplasm. It carries out the reaction GMP + ATP = GDP + ADP. Functionally, essential for recycling GMP and indirectly, cGMP. The sequence is that of Guanylate kinase from Rhodopseudomonas palustris (strain BisB18).